The primary structure comprises 457 residues: Oxygen-independent coproporphyrinogen III oxidase (457 aa).

The 233-residue stretch at 47-279 (LKNPMPLSLY…EILESLISFL (233 aa)) folds into the Radical SAM core domain. Tyr-56 serves as a coordination point for S-adenosyl-L-methionine. 2 residues coordinate [4Fe-4S] cluster: Cys-62 and Cys-66. Residue Phe-68 coordinates S-adenosyl-L-methionine. [4Fe-4S] cluster is bound at residue Cys-69. Residues Gly-113, 114 to 115 (GT), Glu-147, Gln-174, Arg-186, Asp-211, Ala-245, and Ile-331 contribute to the S-adenosyl-L-methionine site.

It belongs to the anaerobic coproporphyrinogen-III oxidase family. In terms of assembly, monomer. [4Fe-4S] cluster is required as a cofactor.

It is found in the cytoplasm. The catalysed reaction is coproporphyrinogen III + 2 S-adenosyl-L-methionine = protoporphyrinogen IX + 2 5'-deoxyadenosine + 2 L-methionine + 2 CO2. Its pathway is porphyrin-containing compound metabolism; protoporphyrin-IX biosynthesis; protoporphyrinogen-IX from coproporphyrinogen-III (AdoMet route): step 1/1. Involved in the heme biosynthesis. Catalyzes the anaerobic oxidative decarboxylation of propionate groups of rings A and B of coproporphyrinogen III to yield the vinyl groups in protoporphyrinogen IX. In Helicobacter pylori (strain J99 / ATCC 700824) (Campylobacter pylori J99), this protein is Oxygen-independent coproporphyrinogen III oxidase (hemN).